Here is a 1735-residue protein sequence, read N- to C-terminus: Glutamine and serine-rich protein 1 (1735 aa).

Met1 is subject to N-acetylmethionine. Positions 267–297 are enriched in polar residues; sequence AIPSSGYPPSTTKIKSCSTEQPLTSTKTPKP. Disordered stretches follow at residues 267-301, 414-440, 479-518, and 533-561; these read AIPS…QSII, TRDL…VSQT, SRAQ…FLPA, and LQNN…SKQE. Positions 417–440 are enriched in low complexity; sequence LSSVSQSQSYSSGHSQGLSPVSQT. Residues Ser586, Ser615, and Ser886 each carry the phosphoserine modification. The residue at position 949 (Thr949) is a Phosphothreonine. Positions 964 to 1033 are disordered; sequence GPSHEVQEQS…EFTLGGDDSG (70 aa). Over residues 971 to 985 the composition is skewed to polar residues; that stretch reads EQSSGPFKKQSATNL. Ser987 is modified (phosphoserine). Residues 997–1024 are compositionally biased toward polar residues; the sequence is STLNNNRNQEFVSSSRSISGENATSESE. Residues Lys1058 and Lys1083 each participate in a glycyl lysine isopeptide (Lys-Gly) (interchain with G-Cter in SUMO2) cross-link. 2 disordered regions span residues 1073 to 1132 and 1178 to 1217; these read KKRA…EKMR and RPGT…DKVD. The segment covering 1120 to 1132 has biased composition (basic and acidic residues); it reads SCHDGYQHQEKMR. Phosphoserine is present on residues Ser1211, Ser1230, Ser1231, and Ser1239. A disordered region spans residues 1256 to 1286; that stretch reads TSDKKKKTEALQVATTSPTANTTGTATTSST. The span at 1269–1286 shows a compositional bias: low complexity; sequence ATTSPTANTTGTATTSST. A Phosphothreonine modification is found at Thr1341. Ser1348 is subject to Phosphoserine. Residues 1441–1532 are disordered; that stretch reads VCSKKPRNKP…SSDDEEFEPP (92 aa). A compositionally biased stretch (polar residues) spans 1449–1478; sequence KPSQTIRTVQAKPSSSSKTSDPLASKTTTT. A compositionally biased stretch (basic and acidic residues) spans 1492–1508; the sequence is VKAEPPPKKRKKWKEEF.

In terms of assembly, interacts with TET1.

It localises to the chromosome. Plays an essential role in the protection and maintenance of transcriptional and developmental programs. Protects many bivalent promoters and poised enhancers from hypermethylation, showing a marked preference for these regulatory elements over other types of promoters or enhancers. Mechanistically, cooperates with TET1 and binds to DNA in a common complex to inhibit the binding of DNMT3A/3B and therefore de novo methylation. This is Glutamine and serine-rich protein 1 (QSER1) from Homo sapiens (Human).